The primary structure comprises 278 residues: Polyamine aminopropyltransferase (278 aa).

The PABS domain occupies 5-238 (ELWFTEQQTP…GLWSFTLGSK (234 aa)). Residue Gln34 coordinates S-methyl-5'-thioadenosine. Spermidine-binding residues include His65 and Asp89. S-methyl-5'-thioadenosine is bound by residues Glu109 and 140 to 141 (DG). Residue Asp158 is the Proton acceptor of the active site. Residue 158-161 (DSTD) participates in spermidine binding. Pro165 is an S-methyl-5'-thioadenosine binding site.

This sequence belongs to the spermidine/spermine synthase family. In terms of assembly, homodimer or homotetramer.

It is found in the cytoplasm. The catalysed reaction is S-adenosyl 3-(methylsulfanyl)propylamine + putrescine = S-methyl-5'-thioadenosine + spermidine + H(+). The protein operates within amine and polyamine biosynthesis; spermidine biosynthesis; spermidine from putrescine: step 1/1. Its function is as follows. Catalyzes the irreversible transfer of a propylamine group from the amino donor S-adenosylmethioninamine (decarboxy-AdoMet) to putrescine (1,4-diaminobutane) to yield spermidine. This is Polyamine aminopropyltransferase from Caldicellulosiruptor bescii (strain ATCC BAA-1888 / DSM 6725 / KCTC 15123 / Z-1320) (Anaerocellum thermophilum).